We begin with the raw amino-acid sequence, 448 residues long: Phosphoglucosamine mutase (448 aa).

Serine 100 functions as the Phosphoserine intermediate in the catalytic mechanism. Mg(2+)-binding residues include serine 100, aspartate 240, aspartate 242, and aspartate 244. A Phosphoserine modification is found at serine 100.

It belongs to the phosphohexose mutase family. It depends on Mg(2+) as a cofactor. In terms of processing, activated by phosphorylation.

The enzyme catalyses alpha-D-glucosamine 1-phosphate = D-glucosamine 6-phosphate. Catalyzes the conversion of glucosamine-6-phosphate to glucosamine-1-phosphate. In Bacillus cereus (strain B4264), this protein is Phosphoglucosamine mutase.